Here is a 1043-residue protein sequence, read N- to C-terminus: Beta-klotho (1043 aa).

Residues 1 to 994 (MKTGCAAGSP…ICSFLVEKKP (994 aa)) are Extracellular-facing. Glycosyl hydrolase-1 stretches follow at residues 77-506 (LYDT…DNGF) and 515-965 (MKGR…SSGL). 12 N-linked (GlcNAc...) asparagine glycosylation sites follow: Asn84, Asn122, Asn161, Asn211, Asn262, Asn308, Asn389, Asn552, Asn609, Asn700, Asn704, and Asn837. Residues 995 to 1015 (LIFFGCCFISTLAVLLSITVF) traverse the membrane as a helical segment. At 1016–1043 (HHQKRRKFQKARNLQNIPLKKGHSRVFS) the chain is on the cytoplasmic side.

It belongs to the glycosyl hydrolase 1 family. Klotho subfamily. In terms of assembly, interacts with FGF19; this interaction is direct. Interacts (via C-terminus) with FGF21; this interaction is direct. Interacts with FGFR1 and FGFR4. Present in liver, muscle and white adipose tissue, but not in kidney (at protein level). Expressed in liver and pancreas, and at lower levels in skin, stomach, skeletal muscle, small intestine and lung.

Its subcellular location is the cell membrane. Functionally, contributes to the transcriptional repression of cholesterol 7-alpha-hydroxylase (CYP7A1), the rate-limiting enzyme in bile acid synthesis. Probably inactive as a glycosidase. Increases the ability of FGFR1 and FGFR4 to bind FGF21. The sequence is that of Beta-klotho (Klb) from Mus musculus (Mouse).